Here is a 379-residue protein sequence, read N- to C-terminus: Probable G-protein coupled receptor No18 (379 aa).

Residues 5-36 lie on the Extracellular side of the membrane; it reads EASITGRTAPELNASAAPLDDERELGETVAAT. Asn-17 carries an N-linked (GlcNAc...) asparagine glycan. A helical membrane pass occupies residues 37 to 58; that stretch reads ALLLAIILVTIVGNSLVIISVF. Residues 59-68 are Cytoplasmic-facing; that stretch reads TYRPLRSVQN. Residues 69–90 traverse the membrane as a helical segment; that stretch reads FFVVSLAVADLTVALFVLPLNV. Residues 91 to 107 are Extracellular-facing; sequence AYRLLNQWLLGSYLCQM. A disulfide bridge links Cys-105 with Cys-184. The helical transmembrane segment at 108–128 threads the bilayer; sequence WLTCDILCCTSSILNLCVIAL. Over 129–148 the chain is Cytoplasmic; sequence DRYWAITDPINYAQKRTIRR. A helical transmembrane segment spans residues 149 to 171; the sequence is VNTMIAAVWALSLVISVPPLLGW. Residues 172-196 are Extracellular-facing; that stretch reads NDWPAQFTEDTPCTLTQERLFVVYS. A helical transmembrane segment spans residues 197-218; it reads SSGSFFIPLIIMSVVYAKIFFA. The Cytoplasmic portion of the chain corresponds to 219 to 303; that stretch reads TKRRLRERTR…LSKERKAARV (85 aa). Residues 234–276 are disordered; it reads AVPAPPQRTSSRPLAELESVASQEDETEPSPEPEPLSSRADKP. Residues 304-325 form a helical membrane-spanning segment; the sequence is LGVIMGVFVVCWLPFFLMYAIV. The Extracellular portion of the chain corresponds to 326–340; sequence PFCTNCAPPSQRVVD. A helical transmembrane segment spans residues 341–362; sequence FVTWLGYVNSSLNPIIYTIYNK. Topologically, residues 363–375 are cytoplasmic; sequence DFRTAFSRLLRCD.

It belongs to the G-protein coupled receptor 1 family.

It is found in the cell membrane. Probable G-protein coupled receptor for an amine. This Amphibalanus amphitrite (Striped barnacle) protein is Probable G-protein coupled receptor No18.